Here is a 615-residue protein sequence, read N- to C-terminus: Protein translocase subunit SecD (615 aa).

6 helical membrane-spanning segments follow: residues Tyr10–Gly30, Gln452–Tyr472, Leu477–Leu497, Met504–Ile524, Gly548–Val570, and Gly585–Tyr605.

Belongs to the SecD/SecF family. SecD subfamily. As to quaternary structure, forms a complex with SecF. Part of the essential Sec protein translocation apparatus which comprises SecA, SecYEG and auxiliary proteins SecDF-YajC and YidC.

It localises to the cell inner membrane. Its function is as follows. Part of the Sec protein translocase complex. Interacts with the SecYEG preprotein conducting channel. SecDF uses the proton motive force (PMF) to complete protein translocation after the ATP-dependent function of SecA. The chain is Protein translocase subunit SecD from Shigella flexneri.